Consider the following 197-residue polypeptide: Nucleoside triphosphate pyrophosphatase (197 aa).

Asp71 functions as the Proton acceptor in the catalytic mechanism.

This sequence belongs to the Maf family. A divalent metal cation serves as cofactor.

Its subcellular location is the cytoplasm. It carries out the reaction a ribonucleoside 5'-triphosphate + H2O = a ribonucleoside 5'-phosphate + diphosphate + H(+). The catalysed reaction is a 2'-deoxyribonucleoside 5'-triphosphate + H2O = a 2'-deoxyribonucleoside 5'-phosphate + diphosphate + H(+). Functionally, nucleoside triphosphate pyrophosphatase. May have a dual role in cell division arrest and in preventing the incorporation of modified nucleotides into cellular nucleic acids. The chain is Nucleoside triphosphate pyrophosphatase from Nostoc punctiforme (strain ATCC 29133 / PCC 73102).